A 703-amino-acid polypeptide reads, in one-letter code: Prolyl 3-hydroxylase 2 (703 aa).

The first 21 residues, 1–21, serve as a signal peptide directing secretion; sequence MRESTWVSLLLLLLLPAPQRG. Residues 18–40 form a disordered region; sequence PQRGGPQDGRGSPEPEPERGPLQ. TPR repeat units follow at residues 42-75, 144-177, 205-238, and 301-334; these read FDLL…HRRL, RVPY…NPEH, HLES…YFNE, and PLHY…HPDD. N-linked (GlcNAc...) asparagine glycosylation is found at Asn444, Asn455, and Asn544. The region spanning 552–666 is the Fe2OG dioxygenase domain; it reads THMVCRTALS…RCAVALWFTL (115 aa). Positions 575, 577, and 647 each coordinate Fe cation. Arg657 is an active-site residue. The short motif at 700-703 is the Prevents secretion from ER element; it reads KDEL.

It belongs to the leprecan family. It depends on Fe cation as a cofactor. Requires L-ascorbate as cofactor. As to expression, detected at low levels in cartilage.

The protein localises to the endoplasmic reticulum. The protein resides in the sarcoplasmic reticulum. Its subcellular location is the golgi apparatus. It catalyses the reaction L-prolyl-[collagen] + 2-oxoglutarate + O2 = trans-3-hydroxy-L-prolyl-[collagen] + succinate + CO2. Functionally, prolyl 3-hydroxylase that catalyzes the post-translational formation of 3-hydroxyproline on collagens. Contributes to proline 3-hydroxylation of collagen COL4A1 and COL1A1 in tendons, the eye sclera and in the eye lens capsule. Has high activity with the type IV collagen COL4A1, and lower activity with COL1A1. Catalyzes hydroxylation of the first Pro in Gly-Pro-Hyp sequences where Hyp is 4-hydroxyproline. Has no activity on substrates that lack 4-hydroxyproline in the third position. The polypeptide is Prolyl 3-hydroxylase 2 (Rattus norvegicus (Rat)).